The sequence spans 277 residues: Bifunctional protein FolD (277 aa).

NADP(+)-binding positions include 164-166 (GRS), Ser189, and Val230.

Belongs to the tetrahydrofolate dehydrogenase/cyclohydrolase family. Homodimer.

The catalysed reaction is (6R)-5,10-methylene-5,6,7,8-tetrahydrofolate + NADP(+) = (6R)-5,10-methenyltetrahydrofolate + NADPH. The enzyme catalyses (6R)-5,10-methenyltetrahydrofolate + H2O = (6R)-10-formyltetrahydrofolate + H(+). It participates in one-carbon metabolism; tetrahydrofolate interconversion. Functionally, catalyzes the oxidation of 5,10-methylenetetrahydrofolate to 5,10-methenyltetrahydrofolate and then the hydrolysis of 5,10-methenyltetrahydrofolate to 10-formyltetrahydrofolate. This chain is Bifunctional protein FolD, found in Exiguobacterium sibiricum (strain DSM 17290 / CCUG 55495 / CIP 109462 / JCM 13490 / 255-15).